Here is a 193-residue protein sequence, read N- to C-terminus: Ribosomal RNA small subunit methyltransferase G (193 aa).

S-adenosyl-L-methionine contacts are provided by residues glycine 61, leucine 66, 112 to 113, and arginine 126; that span reads IE.

It belongs to the methyltransferase superfamily. RNA methyltransferase RsmG family.

Its subcellular location is the cytoplasm. It carries out the reaction guanosine(527) in 16S rRNA + S-adenosyl-L-methionine = N(7)-methylguanosine(527) in 16S rRNA + S-adenosyl-L-homocysteine. Functionally, specifically methylates the N7 position of guanine in position 527 of 16S rRNA. The protein is Ribosomal RNA small subunit methyltransferase G of Paracoccus denitrificans (strain Pd 1222).